Here is a 52-residue protein sequence, read N- to C-terminus: Large ribosomal subunit protein bL32c (52 aa).

This sequence belongs to the bacterial ribosomal protein bL32 family.

Its subcellular location is the plastid. The protein resides in the chloroplast. The sequence is that of Large ribosomal subunit protein bL32c from Nymphaea alba (White water-lily).